The sequence spans 537 residues: Phosphoenolpyruvate carboxykinase (ATP) (537 aa).

Substrate is bound by residues R61, Y194, and K200. ATP is bound by residues K200, H219, and 235–243 (GLSGTGKTT). Mn(2+)-binding residues include K200 and H219. Residue D256 coordinates Mn(2+). E284, R322, and T448 together coordinate ATP. Residue R322 coordinates substrate.

This sequence belongs to the phosphoenolpyruvate carboxykinase (ATP) family. It depends on Mn(2+) as a cofactor.

The protein resides in the cytoplasm. It carries out the reaction oxaloacetate + ATP = phosphoenolpyruvate + ADP + CO2. It participates in carbohydrate biosynthesis; gluconeogenesis. Its function is as follows. Involved in the gluconeogenesis. Catalyzes the conversion of oxaloacetate (OAA) to phosphoenolpyruvate (PEP) through direct phosphoryl transfer between the nucleoside triphosphate and OAA. This chain is Phosphoenolpyruvate carboxykinase (ATP), found in Bradyrhizobium sp. (strain ORS 278).